The primary structure comprises 349 residues: Phosphoribosylformylglycinamidine cyclo-ligase (349 aa).

This sequence belongs to the AIR synthase family.

Its subcellular location is the cytoplasm. The enzyme catalyses 2-formamido-N(1)-(5-O-phospho-beta-D-ribosyl)acetamidine + ATP = 5-amino-1-(5-phospho-beta-D-ribosyl)imidazole + ADP + phosphate + H(+). Its pathway is purine metabolism; IMP biosynthesis via de novo pathway; 5-amino-1-(5-phospho-D-ribosyl)imidazole from N(2)-formyl-N(1)-(5-phospho-D-ribosyl)glycinamide: step 2/2. The protein is Phosphoribosylformylglycinamidine cyclo-ligase of Methanococcus maripaludis (strain C7 / ATCC BAA-1331).